Here is a 290-residue protein sequence, read N- to C-terminus: N-acetylneuraminate lyase (290 aa).

The aceneuramate site is built by Ser-44 and Thr-45. Tyr-133 (proton donor) is an active-site residue. The Schiff-base intermediate with substrate role is filled by Lys-161. The aceneuramate site is built by Thr-163, Gly-185, Asp-187, Glu-188, and Ser-204.

The protein belongs to the DapA family. NanA subfamily. In terms of assembly, homotetramer.

It is found in the cytoplasm. The catalysed reaction is aceneuramate = aldehydo-N-acetyl-D-mannosamine + pyruvate. It functions in the pathway amino-sugar metabolism; N-acetylneuraminate degradation; D-fructose 6-phosphate from N-acetylneuraminate: step 1/5. Its function is as follows. Catalyzes the reversible aldol cleavage of N-acetylneuraminic acid (sialic acid; Neu5Ac) to form pyruvate and N-acetylmannosamine (ManNAc) via a Schiff base intermediate. In Fusobacterium nucleatum subsp. nucleatum (strain ATCC 25586 / DSM 15643 / BCRC 10681 / CIP 101130 / JCM 8532 / KCTC 2640 / LMG 13131 / VPI 4355), this protein is N-acetylneuraminate lyase.